Here is a 675-residue protein sequence, read N- to C-terminus: Myosin-binding protein 3 (675 aa).

A helical membrane pass occupies residues 17 to 37 (ITVILVYAFLEWLLMFFIFLN). Disordered stretches follow at residues 225–274 (LRSI…EEET) and 286–315 (SKNFTGSQIEEEEEDREETTKELDPETPTS). Basic and acidic residues predominate over residues 238–251 (AKSRVSEDEQRNDD). One can recognise a GTD-binding domain in the interval 355–453 (RTIERLRETV…QLQRELEVYR (99 aa)). Positions 474 to 496 (CEADDDDKEEENREEDNSSEMDV) are enriched in acidic residues. Disordered stretches follow at residues 474-497 (CEADDDDKEEENREEDNSSEMDVD), 542-565 (DKESAEDPGEFSNSYEEASNGHGG), and 582-605 (AENESEDGSQGLPESDEKNFGSDS). The segment covering 596–605 (SDEKNFGSDS) has biased composition (basic and acidic residues). The stretch at 605–633 (SEKLEIIKQVDSVYERLQELETDGEFLKN) forms a coiled coil.

In terms of assembly, interacts with myosin XI-K.

It is found in the membrane. Its function is as follows. Membrane-anchored myosin receptors that define a distinct, plant-specific transport vesicle compartment. This chain is Myosin-binding protein 3, found in Arabidopsis thaliana (Mouse-ear cress).